Consider the following 195-residue polypeptide: uncharacterized protein (195 aa).

Over residues 1 to 11 (MDYIVSPTSSE) the composition is skewed to polar residues. The interval 1 to 118 (MDYIVSPTSS…LDTEGGFVLS (118 aa)) is disordered. Residues 35–46 (SPEDITDSDEQN) show a composition bias toward acidic residues. Over residues 47-63 (DTTTTTSEMSSTSSVPS) the composition is skewed to low complexity. The span at 82 to 93 (SDSKLIFDSDNK) shows a compositional bias: basic and acidic residues. The span at 94–110 (DQDDEDDEDDEELEGLD) shows a compositional bias: acidic residues.

This is an uncharacterized protein from Acanthamoeba polyphaga mimivirus (APMV).